Consider the following 425-residue polypeptide: Tol-Pal system protein TolB (425 aa).

The first 25 residues, methionine 1–alanine 25, serve as a signal peptide directing secretion.

The protein belongs to the TolB family. As to quaternary structure, the Tol-Pal system is composed of five core proteins: the inner membrane proteins TolA, TolQ and TolR, the periplasmic protein TolB and the outer membrane protein Pal. They form a network linking the inner and outer membranes and the peptidoglycan layer.

Its subcellular location is the periplasm. Functionally, part of the Tol-Pal system, which plays a role in outer membrane invagination during cell division and is important for maintaining outer membrane integrity. This chain is Tol-Pal system protein TolB, found in Acinetobacter baylyi (strain ATCC 33305 / BD413 / ADP1).